An 838-amino-acid polypeptide reads, in one-letter code: Shutoff protein (838 aa).

The tract at residues 1 to 102 (MEDQHSAASE…EQEEDSPDRY (102 aa)) is disordered. The segment covering 18 to 35 (TLPPPPPPPPPPTSPPPS) has biased composition (pro residues). Over residues 52–65 (TCSSSSSSSASSEC) the composition is skewed to low complexity. The segment at 291–353 (LMQTLLVRRA…ACMVTVQLHC (63 aa)) is binding to host EIF4G. In terms of domain architecture, RRM spans 356 to 474 (TFLTSREMVR…SLWTGFDERT (119 aa)). Residues Y373 and Y690 each carry the phosphotyrosine; by host modification. The disordered stretch occupies residues 693–838 (PHTGEELNTA…QELRRPQRGS (146 aa)). Low complexity predominate over residues 701–710 (TAAPSTAHHA). Basic and acidic residues-rich tracts occupy residues 737–746 (SYADRVRSEL) and 770–787 (HSRD…DQRQ). A compositionally biased stretch (low complexity) spans 813–829 (QALLHQQQQQQEHQPAQ).

This sequence belongs to the adenoviridae shutoff protein family. Monomer. Interacts with hexon protein; this interaction allows chaperoning and trimerization of hexon proteins. Interacts (via N-terminus) with host initiation factor EIF4G (via C-terminus). Interacts (via RRM domain) with viral mRNAs that contain the tripartite leader; this interaction allows ribosome shunting and expression of viral late mRNAs. Might be cleaved by the viral protease. In terms of processing, phosphorylated. Tyrosine phosphorylation enhances preferential binding to tripartite leader mRNAs and allows ribosome shunting. Post-translationally, methylated. Asymmetric dimethylation by host PRMT1 of the Arg/Gly-rich region may regulate shutoff protein binding to hexon and promote the capsid assembly in the nucleus.

It localises to the host cytoplasm. Functionally, protein that inhibits host translation while promoting late viral translation by ribosome shunting. Blocks host cap-dependent translation by binding to eIF4G, displacing MKNK1 from cap initiation complexes and preventing EIF4E phosphorylation. Binds to the tripartite leader sequence of viral late mRNAs and recruits host eIF4G, PABPC1/poly-A binding protein and 40S ribosomes subunits on viral mRNAs, allowing ribosome shunting and efficient translation of late viral mRNAs even though conventional translation via ribosome scanning from the cap has been shut off in the host cell. During assembly, acts as a chaperone protein that helps hexon proteins assembly into trimers. The protein is Shutoff protein of Porcine adenovirus A serotype 3 (PAdV-3).